Here is a 434-residue protein sequence, read N- to C-terminus: Methylenetetrahydrofolate--tRNA-(uracil-5-)-methyltransferase TrmFO (434 aa).

Gly9–Gly14 lines the FAD pocket.

Belongs to the MnmG family. TrmFO subfamily. The cofactor is FAD.

It localises to the cytoplasm. It catalyses the reaction uridine(54) in tRNA + (6R)-5,10-methylene-5,6,7,8-tetrahydrofolate + NADH + H(+) = 5-methyluridine(54) in tRNA + (6S)-5,6,7,8-tetrahydrofolate + NAD(+). The enzyme catalyses uridine(54) in tRNA + (6R)-5,10-methylene-5,6,7,8-tetrahydrofolate + NADPH + H(+) = 5-methyluridine(54) in tRNA + (6S)-5,6,7,8-tetrahydrofolate + NADP(+). In terms of biological role, catalyzes the folate-dependent formation of 5-methyl-uridine at position 54 (M-5-U54) in all tRNAs. This Listeria innocua serovar 6a (strain ATCC BAA-680 / CLIP 11262) protein is Methylenetetrahydrofolate--tRNA-(uracil-5-)-methyltransferase TrmFO.